The primary structure comprises 124 residues: Alpha-amylase inhibitor 0.53 (124 aa).

Cystine bridges form between C20-C41, C28-C83, C42-C99, and C54-C115.

It belongs to the protease inhibitor I6 (cereal trypsin/alpha-amylase inhibitor) family. Homodimer. In terms of processing, the disulfide bonds are essential for the inhibitor activity. As to expression, endosperm.

The protein resides in the secreted. Alpha-amylase inhibitor. This chain is Alpha-amylase inhibitor 0.53, found in Triticum aestivum (Wheat).